A 183-amino-acid chain; its full sequence is Peptide deformylase (183 aa).

Residues Cys-110 and His-153 each contribute to the Fe cation site. The active site involves Glu-154. His-157 lines the Fe cation pocket.

Belongs to the polypeptide deformylase family. Fe(2+) serves as cofactor.

The enzyme catalyses N-terminal N-formyl-L-methionyl-[peptide] + H2O = N-terminal L-methionyl-[peptide] + formate. Functionally, removes the formyl group from the N-terminal Met of newly synthesized proteins. Requires at least a dipeptide for an efficient rate of reaction. N-terminal L-methionine is a prerequisite for activity but the enzyme has broad specificity at other positions. The chain is Peptide deformylase from Listeria monocytogenes serotype 4a (strain HCC23).